The following is a 289-amino-acid chain: ATP synthase gamma chain (289 aa).

This sequence belongs to the ATPase gamma chain family. F-type ATPases have 2 components, CF(1) - the catalytic core - and CF(0) - the membrane proton channel. CF(1) has five subunits: alpha(3), beta(3), gamma(1), delta(1), epsilon(1). CF(0) has three main subunits: a, b and c.

It localises to the cell membrane. In terms of biological role, produces ATP from ADP in the presence of a proton gradient across the membrane. The gamma chain is believed to be important in regulating ATPase activity and the flow of protons through the CF(0) complex. The sequence is that of ATP synthase gamma chain from Mycoplasmoides gallisepticum (strain R(low / passage 15 / clone 2)) (Mycoplasma gallisepticum).